Reading from the N-terminus, the 187-residue chain is Probable GTP-binding protein EngB (187 aa).

Positions 18–187 (KNSEIAFWGR…KLKENINSNF (170 aa)) constitute an EngB-type G domain. GTP is bound by residues 26 to 33 (GRSNVGKS), 52 to 56 (GRTQL), 70 to 73 (DLPG), 137 to 140 (TKID), and 168 to 170 (VSS). Mg(2+) is bound by residues Ser-33 and Thr-54.

This sequence belongs to the TRAFAC class TrmE-Era-EngA-EngB-Septin-like GTPase superfamily. EngB GTPase family. Mg(2+) serves as cofactor.

In terms of biological role, necessary for normal cell division and for the maintenance of normal septation. The chain is Probable GTP-binding protein EngB from Mycoplasmopsis synoviae (strain 53) (Mycoplasma synoviae).